Reading from the N-terminus, the 300-residue chain is MILEGGGVMNLNPGNNLLHQPPTWTDSYSTCNVSSGFFGGQWHEIHPQYWTKYQVWEWLQHLLDTNQLDASCIPFQEFDINGEHLCSMSLQEFTRAAGTAGQLLYSNLQHLKWNGQCSSDLFQSTHNVIVKTEQTEPSIVNTWKDENYLYDTNYGSTVDLLDSKTFCRAQISMTTTSHLPVAESPDMKKEQDPPAKCHTKKHNPRGTHLWEFIRDILLNPDKNPGLIKWEDRSEGVFRFLKSEAVAQLWGKKKNNSSMTYEKLSRAMRYYYKREILERVDGRRLVYKFGKNARGWRENEN.

The PNT domain maps to serine 29 to glycine 115. The segment at glutamate 183–histidine 202 is disordered. The span at proline 185–alanine 195 shows a compositional bias: basic and acidic residues. Positions threonine 207–glycine 289 form a DNA-binding region, ETS.

It belongs to the ETS family.

The protein resides in the nucleus. Functionally, transcriptional activator that may play a role in regulating epithelial cell differentiation and proliferation. May act as a repressor for a specific subset of ETS/AP-1-responsive genes, and as a modulator of the nuclear response to mitogen-activated protein kinase signaling cascades. Binds to DNA sequences containing the consensus nucleotide core sequence GGAA. Involved in regulation of TNFRSF10B/DR5 expression through Ets-binding sequences on the TNFRSF10B/DR5 promoter. The protein is ETS homologous factor (EHF) of Pan paniscus (Pygmy chimpanzee).